A 102-amino-acid polypeptide reads, in one-letter code: MEIDIFEDKENKVFNRREIKFYVEYEGEATPKITDIKSKLVALLNSKKESTVVDNVQPHYGEPKALGYAKVYETVEDLEYIETKSVIAKNTEASEEAEEDEE.

It belongs to the eukaryotic ribosomal protein eS24 family.

The polypeptide is Small ribosomal subunit protein eS24 (Methanobrevibacter smithii (strain ATCC 35061 / DSM 861 / OCM 144 / PS)).